Reading from the N-terminus, the 534-residue chain is Calcium-dependent protein kinase 18 (534 aa).

The interval 1-49 is disordered; the sequence is MGLCFSSPKATRRGTGSRNPNPDSPTQGKASEKVSNKNKKNTKKIQLRH. A lipid anchor (N-myristoyl glycine) is attached at glycine 2. Over residues 14-29 the composition is skewed to polar residues; it reads GTGSRNPNPDSPTQGK. The segment covering 36 to 47 has biased composition (basic residues); sequence NKNKKNTKKIQL. The Protein kinase domain occupies 71-331; sequence YTIGKLLGHG…AAQALSHSWV (261 aa). ATP is bound by residues 77–85 and lysine 100; that span reads LGHGQFGFT. Aspartate 197 serves as the catalytic Proton acceptor. A Phosphoserine modification is found at serine 237. An autoinhibitory domain region spans residues 337-367; sequence ASEVPIDISVLNNMRQFVKFSRLKQIALRAL. 4 consecutive EF-hand domains span residues 374-409, 411-446, 453-488, and 491-518; these read DELDDLRDQFDAIDIDKNGSISLEEMRQALAKDVPW, LKDARVAEILQANDSNTDGLVDFTEFVVAALHVNQL, KWQQRSRAAFDKFDIDGDGFITPEELRLQTGLKGSI, and LLEEADVDEDGRISINEFRRLLRSASLK. Ca(2+) contacts are provided by aspartate 387, aspartate 389, asparagine 391, serine 393, glutamate 398, aspartate 424, asparagine 426, aspartate 428, glutamate 435, aspartate 466, aspartate 468, aspartate 470, glutamate 477, aspartate 496, aspartate 498, aspartate 500, and arginine 502. Serine 504 is modified (phosphoserine). Ca(2+) is bound at residue glutamate 507.

This sequence belongs to the protein kinase superfamily. Ser/Thr protein kinase family. CDPK subfamily.

The protein resides in the membrane. It catalyses the reaction L-seryl-[protein] + ATP = O-phospho-L-seryl-[protein] + ADP + H(+). The catalysed reaction is L-threonyl-[protein] + ATP = O-phospho-L-threonyl-[protein] + ADP + H(+). With respect to regulation, activated by calcium. Autophosphorylation may play an important role in the regulation of the kinase activity. Its function is as follows. May play a role in signal transduction pathways that involve calcium as a second messenger. The chain is Calcium-dependent protein kinase 18 (CPK18) from Arabidopsis thaliana (Mouse-ear cress).